A 1241-amino-acid polypeptide reads, in one-letter code: Interphotoreceptor matrix proteoglycan 2 (1241 aa).

A signal peptide spans 1–28; it reads MIMFLPLGRISLGILILFLTGGNLVSVS. Over 29–1104 the chain is Extracellular; it reads EEIQDRMHAV…CEEFVSEPFV (1076 aa). An O-linked (GalNAc...) threonine glycan is attached at Thr-193. The disordered stretch occupies residues 206–234; it reads AASERSAASPQESISNEIENVTEQPTPPA. Residues 211-229 show a composition bias toward polar residues; the sequence is SAASPQESISNEIENVTEQ. Residue Asn-225 is glycosylated (N-linked (GlcNAc...) asparagine). Thr-231 carries an O-linked (GalNAc...) threonine glycan. Residues 235–349 form the SEA 1 domain; it reads AEQIAEFSIQ…KPTAVYTISN (115 aa). A hyaluronan-binding motif involved in chondroitin sulfate A-binding region spans residues 255–263; that stretch reads RDPSSALYR. N-linked (GlcNAc...) asparagine glycans are attached at residues Asn-297, Asn-316, and Asn-366. O-linked (GalNAc...) threonine glycosylation is found at Thr-429, Thr-430, and Thr-431. The span at 431-443 shows a compositional bias: low complexity; it reads TISPFGFSSGPPS. Disordered stretches follow at residues 431–456 and 500–520; these read TISPFGFSSGPPSATGRELHSESTLG and VAPEGRTSGSSILEDDNTEES. An O-linked (GalNAc...) threonine glycan is attached at Thr-817. Residues Asn-841, Asn-945, and Asn-959 are each glycosylated (N-linked (GlcNAc...) asparagine). Positions 900–1013 constitute an SEA 2 domain; the sequence is GALVVFFSLR…YSLDVESGDD (114 aa). EGF-like domains are found at residues 1013–1054 and 1055–1096; these read DANP…LPCQ and SVCD…QHCE. Cystine bridges form between Cys-1017–Cys-1028, Cys-1022–Cys-1039, Cys-1041–Cys-1053, Cys-1057–Cys-1070, Cys-1064–Cys-1080, and Cys-1082–Cys-1095. The segment at 1083–1091 is hyaluronan-binding motif involved in chondroitin sulfate C-binding; that stretch reads RVGSNWWYR. Residues 1105–1125 traverse the membrane as a helical segment; the sequence is IGITIASVVSLLLVASAVVFF. Residues 1126 to 1241 lie on the Cytoplasmic side of the membrane; it reads LAKMLQAQNV…FVREHEMEEL (116 aa). Residues 1128–1136 form a hyaluronan-binding motif involved in chondroitin sulfate A- and C-binding region; that stretch reads KMLQAQNVR. The interval 1139-1145 is hyaluronan-binding motif involved in chondroitin sulfate C-binding; it reads RQRPTNR. The segment at 1210-1218 is hyaluronan-binding motif involved in chondroitin sulfate A- and C-binding motif; it reads KEEIQERMR.

Expressed in the pineal gland and the outer layer of the retina.

It localises to the photoreceptor outer segment membrane. Its subcellular location is the photoreceptor inner segment membrane. The protein resides in the secreted. It is found in the extracellular space. The protein localises to the extracellular matrix. It localises to the interphotoreceptor matrix. Its function is as follows. Chondroitin sulfate- and hyaluronan-binding proteoglycan involved in the organization of interphotoreceptor matrix; may participate in the maturation and maintenance of the light-sensitive photoreceptor outer segment. Binds heparin. The protein is Interphotoreceptor matrix proteoglycan 2 (Impg2) of Rattus norvegicus (Rat).